The sequence spans 874 residues: Alanine--tRNA ligase (874 aa).

Residues His562, His566, Cys664, and His668 each coordinate Zn(2+).

This sequence belongs to the class-II aminoacyl-tRNA synthetase family. Requires Zn(2+) as cofactor.

It is found in the cytoplasm. It carries out the reaction tRNA(Ala) + L-alanine + ATP = L-alanyl-tRNA(Ala) + AMP + diphosphate. Its function is as follows. Catalyzes the attachment of alanine to tRNA(Ala) in a two-step reaction: alanine is first activated by ATP to form Ala-AMP and then transferred to the acceptor end of tRNA(Ala). Also edits incorrectly charged Ser-tRNA(Ala) and Gly-tRNA(Ala) via its editing domain. The protein is Alanine--tRNA ligase of Shewanella woodyi (strain ATCC 51908 / MS32).